Reading from the N-terminus, the 449-residue chain is L-lysine-epsilon aminotransferase (449 aa).

Residues Gly128 and Ala129 each coordinate pyridoxal 5'-phosphate. Residues Arg170 and Gln274 each coordinate 2-oxoglutarate. Arg170 contacts L-lysine. A pyridoxal 5'-phosphate-binding site is contributed by Gln274. An N6-(pyridoxal phosphate)lysine modification is found at Lys300. Residue Arg422 coordinates 2-oxoglutarate.

The protein belongs to the class-III pyridoxal-phosphate-dependent aminotransferase family. Requires pyridoxal 5'-phosphate as cofactor.

It catalyses the reaction L-lysine + 2-oxoglutarate = (S)-2-amino-6-oxohexanoate + L-glutamate. Catalyzes the transfer of the terminal amino group of L-lysine to alpha-ketoglutarate to yield L-glutamate and 2-aminoadipate 6-semialdehyde ((S)-2-amino-6-oxohexanoate), which is spontaneously converted to the dehydrated form 1-piperideine 6-carboxylate. In Mycobacterium bovis (strain ATCC BAA-935 / AF2122/97), this protein is L-lysine-epsilon aminotransferase.